The following is a 1589-amino-acid chain: MLPPKHLSATKPKKSWAPNLYELDSDLTKEPDVIIGEGPTDSEFFHQRFRNLIYVEFVGPRKTLIKLRNLCLDWLQPETRTKEEIIELLVLEQYLTIIPEKLKPWVRAKKPENCEKLVTLLENYKEMYQPEDDNNSDVTSDDDMTRNRRESSPPHSVHSFSGDRDWDRRGRSRDMEPRDRWSHTRNPRSRMPQRDLSLPVVAKTSFEMDRDDDRDSRAYESRSQDAESYQNVVDLAEDRKPHNTIQDNMENYRKLLSLGVQLAEDDGHSHMTQGHSSRSKRSAYPSTSRGLKTMPEAKKSTHRRGICEDESSHGVIMEKFIKDVSRSSKSGRARESSDRSQRFPRMSDDNWKDISLNKRESVIQQRVYEGNAFRGGFRFNSTLVSRKRVLERKRRYHFDTDGKGSIHDQKGCPRKKPFECGSEMRKAMSMSSLSSLSSPSFTESQPIDFGAMPYVCDECGRSFSVISEFVEHQIMHTRENLYEYGESFIHSVAVSEVQKSQVGGKRFECKDCGETFNKSAALAEHRKIHARGYLVECKNQECEEAFMPSPTFSELQKIYGKDKFYECRVCKETFLHSSALIEHQKIHFGDDKDNEREHERERERGETFRPSPALNEFQKMYGKEKMYECKVCGETFLHSSSLKEHQKIHTRGNPFENKGKVCEETFIPGQSLKRRQKTYNKEKLYDFTDGRDAFMQSSELSEHQKIHSRKNLFEGRGYEKSVIHSGPFTESQKSHTITRPLESDEDEKAFTISSNPYENQKIPTKENVYEAKSYERSVIHSLASVEAQKSHSVAGPSKPKVMAESTIQSFDAINHQRVRAGGNTSEGREYNRSVIHSLVASKPPRSHNGNELVESNEKGESSIYISDLNDKRQKIPARENPCEGGSKNRNYEDSVIQSVSRAKPQKSVPGEGSGEFKKDGEFSVPSSNVREYQKARAKKKYIEHRSNETSVIHSLPFGEQTFRPRGMLYECQECGECFAHSSDLTEHQKIHDREKPSGSRNYEWSVIRSLAPTDPQTSYAQEQYAKEQARNKCKEFRQFFATSEDLNTNQKIYDQEKSHGEESQGENTDGEETHSEETHGQETIEDPVIQSSDMEDPQKDDPDDKIYECEDCGLGFVDLTDLTDHQKVHSRKCLVDSREYTHSVIHTHSISEYQRDYTGEQLYECPKCGESFIHSSFLFEHQRIHEQDQLYSMKGCDDGFIALLPMKPRRNRAAERNPALAGSAIRCLLCGQGFIHSSALNEHMRLHREDDLLEQSQMVEEAIIPGLALTEFQRSQTEERLFECAVCGESFVNPAELADHVTVHKNEPYEYGSSYTHTSFLTEPLKGAIPFYECKDCGKSFIHSTVLTKHKELHLEEEEEEDEAAAAAAAAAQEVEANVHVPQVVLRIQGSNVEAAEPEVEAAEPEVEAAEPEVEAAEPNGEAEGPDGEAAEPIGEAGQPNGEAEQPNGDADEPDGAGIEDPEERAEEPEGKAEEPEGDADEPDGVGIEDPEEGEDQEIQVEEPYYDCHECTETFTSSTAFGEHLKTHASMIIFEPADAFGECSGYIERASTSTGGANQADEKYFKCDVCGQLFNDRLSLARHQNTHTG.

The region spanning 46–128 (HQRFRNLIYV…TLLENYKEMY (83 aa)) is the SCAN box domain. Disordered regions lie at residues 128–230 (YQPE…ESYQ), 266–306 (DGHS…RRGI), and 319–349 (KFIK…MSDD). The segment covering 129 to 142 (QPEDDNNSDVTSDD) has biased composition (acidic residues). Basic and acidic residues-rich tracts occupy residues 143–152 (DMTRNRRESS), 161–182 (SGDR…DRWS), 206–225 (FEMD…RSQD), and 295–306 (PEAKKSTHRRGI). C2H2-type zinc fingers lie at residues 454–476 (YVCD…QIMH), 507–529 (FECK…RKIH), and 565–587 (YECR…QKIH). The span at 588–607 (FGDDKDNEREHERERERGET) shows a compositional bias: basic and acidic residues. Residues 588–610 (FGDDKDNEREHERERERGETFRP) are disordered. A C2H2-type 4 zinc finger spans residues 627 to 649 (YECKVCGETFLHSSSLKEHQKIH). The interval 838–930 (LVASKPPRSH…EFSVPSSNVR (93 aa)) is disordered. Residues 868-881 (LNDKRQKIPARENP) show a composition bias toward basic and acidic residues. The segment at 969-991 (YECQECGECFAHSSDLTEHQKIH) adopts a C2H2-type 5 zinc-finger fold. Residues 1056–1104 (EKSHGEESQGENTDGEETHSEETHGQETIEDPVIQSSDMEDPQKDDPDD) form a disordered region. Basic and acidic residues predominate over residues 1071-1082 (EETHSEETHGQE). 5 C2H2-type zinc fingers span residues 1107-1129 (YECE…QKVH), 1163-1185 (YECP…QRIH), 1225-1247 (IRCL…MRLH), 1282-1304 (FECA…VTVH), and 1332-1354 (YECK…KELH). Positions 1396–1416 (AEPEVEAAEPEVEAAEPEVEA) are enriched in acidic residues. The interval 1396 to 1496 (AEPEVEAAEP…GIEDPEEGED (101 aa)) is disordered. A run of 7 repeats spans residues 1398–1404 (PEVEAAE), 1405–1411 (PEVEAAE), 1412–1418 (PEVEAAE), 1419–1423 (PNGEA), 1426–1430 (PDGEA), 1433–1437 (PIGEA), and 1440–1444 (PNGEA). Residues 1398–1418 (PEVEAAEPEVEAAEPEVEAAE) form a 3 X 7 AA repeat of P-E-V-E-A-A-E region. The segment at 1419–1444 (PNGEAEGPDGEAAEPIGEAGQPNGEA) is 4 X 5 AA repeat of P-X-G-E-A. Composition is skewed to acidic residues over residues 1450 to 1467 (DADE…ERAE) and 1476 to 1496 (PEGD…EGED). 2 C2H2-type zinc fingers span residues 1506-1528 (YDCH…LKTH) and 1565-1587 (FKCD…QNTH).

Belongs to the krueppel C2H2-type zinc-finger protein family. Homodimer. Interacts with SIAH1A and SIAH2. Interacts with TRAF2.

Its subcellular location is the nucleus. The protein resides in the cytoplasm. Functionally, induces apoptosis in cooperation with SIAH1A. Acts as a mediator between p53/TP53 and BAX in a neuronal death pathway that is activated by DNA damage. Acts synergistically with TRAF2 and inhibits TNF induced apoptosis through activation of NF-kappa-B. This is Paternally-expressed gene 3 protein (PEG3) from Gorilla gorilla gorilla (Western lowland gorilla).